The primary structure comprises 73 residues: Antitoxin VapB2 (73 aa).

As to quaternary structure, forms a homodimer, which binds to a toxin homodimer, which then oligomerizes further to a hetero-octamer. When bound to toxin VapC2 the toxin activity is inhibited; 1 antitoxin may suffice to inhibit toxin.

In terms of biological role, antitoxin component of a type II toxin-antitoxin (TA) system. Upon expression in M.smegmatis neutralizes the effect of cognate toxin VapC2. The C-terminal helix of the antitoxin may obstruct the toxin's RNA-binding groove, blocking access to the active sites. Additionally, the C-terminal arginine of the antitoxin may remove Mg(2+) ions from the toxin active sites. The protein is Antitoxin VapB2 (vapB2) of Mycobacterium tuberculosis (strain ATCC 25618 / H37Rv).